The following is a 233-amino-acid chain: Adenosine 5'-phosphosulfate reductase (233 aa).

[4Fe-4S] cluster contacts are provided by cysteine 120, cysteine 121, cysteine 203, and cysteine 206. The active-site Nucleophile; cysteine thiosulfonate intermediate is cysteine 229.

This sequence belongs to the PAPS reductase family. CysH subfamily. [4Fe-4S] cluster is required as a cofactor.

It localises to the cytoplasm. It catalyses the reaction [thioredoxin]-disulfide + sulfite + AMP + 2 H(+) = adenosine 5'-phosphosulfate + [thioredoxin]-dithiol. It participates in sulfur metabolism; hydrogen sulfide biosynthesis; sulfite from sulfate. In terms of biological role, catalyzes the formation of sulfite from adenosine 5'-phosphosulfate (APS) using thioredoxin as an electron donor. The chain is Adenosine 5'-phosphosulfate reductase from Lysinibacillus sphaericus (strain C3-41).